A 240-amino-acid polypeptide reads, in one-letter code: MGKTQPLPILITGGGRRIGLALAWHFINQKQPVIVSYRTHYPAIDGLINAGAQCIQADFSTNDGVMAFADEVLKSTHGLRAILHNASAWMAEKPGAPLADVLACMMQIHVNTPYLLNHALERLLRGHGHAASDIIHFTDYVVERGSDKHIAYAASKAALDNMTRSFARKLAPEVKVNSIAPSLILFNEHDDAEYRQQALNKSLMKTAPGEKEVIDLVDYLLTSCFVTGRSFPLDGGRHLR.

Catalysis depends on Tyr152, which acts as the Proton acceptor.

Belongs to the short-chain dehydrogenases/reductases (SDR) family. FolM subfamily.

The enzyme catalyses (6S)-5,6,7,8-tetrahydrofolate + NADP(+) = 7,8-dihydrofolate + NADPH + H(+). It catalyses the reaction 7,8-dihydromonapterin + NADPH + H(+) = 5,6,7,8-tetrahydromonapterin + NADP(+). Catalyzes the reduction of dihydromonapterin to tetrahydromonapterin. Also has lower activity with dihydrofolate. The chain is Dihydromonapterin reductase (folM) from Escherichia coli O157:H7.